Consider the following 429-residue polypeptide: 3-isopropylmalate dehydratase large subunit (429 aa).

Residues C303, C363, and C366 each coordinate [4Fe-4S] cluster.

Belongs to the aconitase/IPM isomerase family. LeuC type 2 subfamily. Heterodimer of LeuC and LeuD. It depends on [4Fe-4S] cluster as a cofactor.

The catalysed reaction is (2R,3S)-3-isopropylmalate = (2S)-2-isopropylmalate. The protein operates within amino-acid biosynthesis; L-leucine biosynthesis; L-leucine from 3-methyl-2-oxobutanoate: step 2/4. In terms of biological role, catalyzes the isomerization between 2-isopropylmalate and 3-isopropylmalate, via the formation of 2-isopropylmaleate. The protein is 3-isopropylmalate dehydratase large subunit of Caldicellulosiruptor bescii (strain ATCC BAA-1888 / DSM 6725 / KCTC 15123 / Z-1320) (Anaerocellum thermophilum).